The sequence spans 378 residues: Probable G-protein coupled receptor frpr-1 (378 aa).

Transmembrane regions (helical) follow at residues 47 to 67 (LVVIGLMLPLIGCLGLIGNAL), 85 to 105 (LFALACSDIVIILTAFFLFFL), 120 to 140 (AVLSPVMFPLGLTAQTMSVFI), 180 to 200 (VIVCLKIIVKIFLLGIFYNSP), 243 to 263 (TIVMAVGPVLLLIVINTAIVI), 277 to 297 (IITLVLVVCLFISCNVLPLTV), and 315 to 337 (SNLMVVVNSSCNFLIYYTFGSNF).

This sequence belongs to the G-protein coupled receptor 1 family.

Its subcellular location is the cell membrane. This Caenorhabditis elegans protein is Probable G-protein coupled receptor frpr-1.